A 471-amino-acid chain; its full sequence is Putative metabolite transport protein YncC (471 aa).

The next 12 helical transmembrane spans lie at 13–33 (LIMI…GVIN), 50–70 (VTEG…ALLC), 88–108 (FLFF…IMAV), 111–131 (FLLG…LAEM), 146–166 (LMIV…GVTM), 175–195 (YMLV…LKVP), 256–276 (LLWI…NSIM), 295–315 (IANI…IWLV), 323–343 (ILLI…IFSI), 358–378 (LTVL…WLVI), 393–413 (ISVF…PILL), and 416–436 (VGLS…IGFV).

It belongs to the major facilitator superfamily. Sugar transporter (TC 2.A.1.1) family.

It localises to the cell membrane. In Bacillus subtilis (strain 168), this protein is Putative metabolite transport protein YncC (yncC).